The following is a 489-amino-acid chain: Glycogen synthase (489 aa).

R20 contributes to the ADP-alpha-D-glucose binding site.

Belongs to the glycosyltransferase 1 family. Bacterial/plant glycogen synthase subfamily.

The enzyme catalyses [(1-&gt;4)-alpha-D-glucosyl](n) + ADP-alpha-D-glucose = [(1-&gt;4)-alpha-D-glucosyl](n+1) + ADP + H(+). It functions in the pathway glycan biosynthesis; glycogen biosynthesis. Its function is as follows. Synthesizes alpha-1,4-glucan chains using ADP-glucose. The sequence is that of Glycogen synthase from Chlorobium limicola (strain DSM 245 / NBRC 103803 / 6330).